Consider the following 833-residue polypeptide: pre-rRNA 2'-O-ribose RNA methyltransferase (833 aa).

S-adenosyl-L-methionine-binding residues include G57, W59, D77, D93, and D118. K158 (proton acceptor) is an active-site residue. 5 disordered regions span residues 323–349, 363–453, 475–640, 730–767, and 779–833; these read KLDNPDEEETEKPEEKKELTAEEMEEN, KKKR…DEYL, LDDV…SDED, LGKKMEKTRDKASSIVDNPEMSNREKSKAIEKLYSGTD, and IAKK…KNKK. The stretch at 336 to 386 forms a coiled coil; it reads EEKKELTAEEMEENLQEEMKEYLALVEKKKRKEKKRQNELKRKHQRKIELT. The span at 363 to 381 shows a compositional bias: basic residues; the sequence is KKKRKEKKRQNELKRKHQR. Basic and acidic residues predominate over residues 382–396; it reads KIELTMHIPGDKIEE. The span at 423–441 shows a compositional bias: acidic residues; it reads SSDEFDSDDSDDDDDDDNN. Positions 455–485 form a coiled coil; the sequence is QQLDEQYKLYQQRIRKKAAKLDDVKVKKDKI. Basic and acidic residues predominate over residues 475-486; sequence LDDVKVKKDKIG. 2 stretches are compositionally biased toward acidic residues: residues 490–503 and 542–556; these read YNEDDEEFVEEQEE and SESEPEQDGDDDQDD. Positions 557 to 566 are enriched in basic and acidic residues; it reads ENNKPIDISK. 2 stretches are compositionally biased toward acidic residues: residues 605 to 614 and 626 to 640; these read DKDDQDDDDD and PVQEEVEYESDSDED. 3 stretches are compositionally biased toward basic and acidic residues: residues 732 to 741, 751 to 767, and 794 to 806; these read KKMEKTRDKA, SNREKSKAIEKLYSGTD, and KIVDKRMKKDLRA.

It belongs to the class I-like SAM-binding methyltransferase superfamily. RNA methyltransferase RlmE family. SPB1 subfamily.

The protein resides in the nucleus. It localises to the nucleolus. The enzyme catalyses a ribonucleotide in rRNA + S-adenosyl-L-methionine = a 2'-O-methylribonucleotide in rRNA + S-adenosyl-L-homocysteine + H(+). Its function is as follows. RNA 2'-O-methyltransferase involved in the maturation of rRNA and in the biogenesis of ribosomal subunits. The chain is pre-rRNA 2'-O-ribose RNA methyltransferase (fsjC) from Dictyostelium discoideum (Social amoeba).